A 302-amino-acid polypeptide reads, in one-letter code: Elongation factor Ts (302 aa).

The involved in Mg(2+) ion dislocation from EF-Tu stretch occupies residues 80 to 83 (TDFV).

It belongs to the EF-Ts family.

It localises to the cytoplasm. Associates with the EF-Tu.GDP complex and induces the exchange of GDP to GTP. It remains bound to the aminoacyl-tRNA.EF-Tu.GTP complex up to the GTP hydrolysis stage on the ribosome. The sequence is that of Elongation factor Ts from Gluconobacter oxydans (strain 621H) (Gluconobacter suboxydans).